The primary structure comprises 334 residues: Hydroxyproline O-arabinosyltransferase NOD3 (334 aa).

A helical; Signal-anchor membrane pass occupies residues Leu1 to Ile18.

It belongs to the RDN family.

Its subcellular location is the golgi apparatus membrane. The enzyme catalyses trans-4-hydroxy-L-prolyl-[protein] + UDP-beta-L-arabinofuranose = O-(beta-L-arabinofuranosyl)-trans-4-hydroxy-L-prolyl-[protein] + UDP + H(+). Functionally, probable glycosyltransferase involved in the O-arabinosylation of several proteins including extensins and small signaling peptides. Catalyzes the transfer of the initial L-arabinose to the hydroxyl group of Hyp residues. Probably involved in the arabinosylation of CLAVATA3/ESR-related (CLE) signaling peptides that move from root to shoot, to interact with receptor kinase signaling that regulates nodulation. Involved in long distance nodulation signaling events. Involved in the autoregulation of nodulation (AON), a long distance systemic signaling from root to shoot and back again, which allows legumes to limit the number of root nodules formed based on available nitrogen and previous rhizobial colonization. This is Hydroxyproline O-arabinosyltransferase NOD3 from Pisum sativum (Garden pea).